A 459-amino-acid polypeptide reads, in one-letter code: uncharacterized protein (459 aa).

The 59-residue stretch at 9 to 67 folds into the TRAM domain; sequence KLEVGQTFPVTIKRLGINGEGVGYFKRQVVFIPGALPGEEVVAETTKIQRGFAEAKVKK. [4Fe-4S] cluster contacts are provided by Cys-80, Cys-86, Cys-89, and Cys-168. Residues Gln-292, Tyr-321, Asp-342, and Asp-390 each contribute to the S-adenosyl-L-methionine site. Cys-417 acts as the Nucleophile in catalysis.

It belongs to the class I-like SAM-binding methyltransferase superfamily. RNA M5U methyltransferase family.

This is an uncharacterized protein from Bacillus anthracis.